A 352-amino-acid chain; its full sequence is Chorismate synthase (352 aa).

NADP(+) contacts are provided by Arg48 and Arg54. FMN is bound by residues 125–127 (RSS), 238–239 (NA), Gly278, 293–297 (KPTSS), and Arg319.

The protein belongs to the chorismate synthase family. Homotetramer. The cofactor is FMNH2.

It catalyses the reaction 5-O-(1-carboxyvinyl)-3-phosphoshikimate = chorismate + phosphate. It participates in metabolic intermediate biosynthesis; chorismate biosynthesis; chorismate from D-erythrose 4-phosphate and phosphoenolpyruvate: step 7/7. In terms of biological role, catalyzes the anti-1,4-elimination of the C-3 phosphate and the C-6 proR hydrogen from 5-enolpyruvylshikimate-3-phosphate (EPSP) to yield chorismate, which is the branch point compound that serves as the starting substrate for the three terminal pathways of aromatic amino acid biosynthesis. This reaction introduces a second double bond into the aromatic ring system. This Bordetella avium (strain 197N) protein is Chorismate synthase.